The chain runs to 349 residues: MDIPSMHDHDRYELVKDIGSGNFGVARLMRDKKTRELVAVKYIERGEKIDENVQREIINHRSLRHPNIVRFKEVMLTPTHLAIVMEYAAGGELFERICNAGRFSEDEARFFFQQLISGVSYCHSMQICHRDLKLENTLLDGSPAPRLKICDFGYSKSSLLHSQPKSTVGTPAYIAPEVLSKKEYDGKIADVWSCGVTLYVMLVGAYPFEDPEDPRNFRKTIGRILSVQYSIPDYVHISVECRHLLSRIFVANPAKRINIQEIKNHEWFLKNLPADLVDLADRSYDFEDPNHPPQSIEEIMRIISEARVLGTGATGDYFGDSVDDMDLENDVDPDADPDVGSSGEFVCAM.

The Protein kinase domain maps to 12–268 (YELVKDIGSG…IQEIKNHEWF (257 aa)). Residues 18–26 (IGSGNFGVA) and lysine 41 each bind ATP. Aspartate 131 serves as the catalytic Proton acceptor. The activation loop stretch occupies residues 151-177 (DFGYSKSSLLHSQPKSTVGTPAYIAPE).

This sequence belongs to the protein kinase superfamily. Ser/Thr protein kinase family.

The enzyme catalyses L-seryl-[protein] + ATP = O-phospho-L-seryl-[protein] + ADP + H(+). The catalysed reaction is L-threonyl-[protein] + ATP = O-phospho-L-threonyl-[protein] + ADP + H(+). Its activity is regulated as follows. Activated by osmotic stress and by abscisic acid (ABA). Activation by NaCl is dependent on ABA. Involved in early responses to osmotic stress. The chain is Serine/threonine-protein kinase SRK2A from Physcomitrium patens (Spreading-leaved earth moss).